The sequence spans 54 residues: Ovomucoid (54 aa).

One can recognise a Kazal-like domain in the interval valine 4 to cysteine 54. 3 cysteine pairs are disulfide-bonded: cysteine 6–cysteine 36, cysteine 14–cysteine 33, and cysteine 22–cysteine 54. Asparagine 43 carries an N-linked (GlcNAc...) asparagine glycan.

It is found in the secreted. This is Ovomucoid from Pavo muticus (Green peafowl).